Consider the following 98-residue polypeptide: Large ribosomal subunit protein bL28 (98 aa).

This sequence belongs to the bacterial ribosomal protein bL28 family.

The chain is Large ribosomal subunit protein bL28 from Thermus thermophilus (strain ATCC BAA-163 / DSM 7039 / HB27).